A 105-amino-acid polypeptide reads, in one-letter code: Class I hydrophobin 1 (105 aa).

The signal sequence occupies residues 1–17; sequence MQFTSFAILAISAVASA. 4 cysteine pairs are disulfide-bonded: cysteine 36-cysteine 85, cysteine 44-cysteine 78, cysteine 45-cysteine 63, and cysteine 86-cysteine 100. N-linked (GlcNAc...) asparagine glycosylation is found at asparagine 48, asparagine 67, and asparagine 97.

The protein belongs to the fungal hydrophobin family. In terms of assembly, self-assembles to form functional amyloid fibrils called rodlets. Self-assembly into fibrillar rodlets occurs spontaneously at hydrophobic:hydrophilic interfaces and the rodlets further associate laterally to form amphipathic monolayers. As to expression, abundant on conidia and aerial structures formed in vitro and emerging from disease lesions on infected tomato plants.

It is found in the secreted. The protein localises to the cell wall. In terms of biological role, aerial growth, conidiation, and dispersal of filamentous fungi in the environment rely upon a capability of their secreting small amphipathic proteins called hydrophobins (HPBs) with low sequence identity. Class I can self-assemble into an outermost layer of rodlet bundles on aerial cell surfaces, conferring cellular hydrophobicity that supports fungal growth, development and dispersal; whereas Class II form highly ordered films at water-air interfaces through intermolecular interactions but contribute nothing to the rodlet structure. Hcf-1 is a class I hydrophobin that is not necessary for the development of hyphae or conidia but acts as the main determinant of conidium hydrophobicity and, thus, is required for efficient water-mediated dispersal of conidia. Forms a component of the rodlet layer, but other hydrophobins must also participate in this proces. The chain is Class I hydrophobin 1 from Passalora fulva (Tomato leaf mold).